Consider the following 936-residue polypeptide: Protein translocase subunit SecA (936 aa).

Residues Q87, 105-109 (GEGKT), and D515 each bind ATP. Positions 920, 922, 931, and 932 each coordinate Zn(2+).

Belongs to the SecA family. Monomer and homodimer. Part of the essential Sec protein translocation apparatus which comprises SecA, SecYEG and auxiliary proteins SecDF-YajC and YidC. Zn(2+) serves as cofactor.

Its subcellular location is the cell inner membrane. It is found in the cytoplasm. It carries out the reaction ATP + H2O + cellular proteinSide 1 = ADP + phosphate + cellular proteinSide 2.. In terms of biological role, part of the Sec protein translocase complex. Interacts with the SecYEG preprotein conducting channel. Has a central role in coupling the hydrolysis of ATP to the transfer of proteins into and across the cell membrane, serving both as a receptor for the preprotein-SecB complex and as an ATP-driven molecular motor driving the stepwise translocation of polypeptide chains across the membrane. This chain is Protein translocase subunit SecA, found in Paraburkholderia phytofirmans (strain DSM 17436 / LMG 22146 / PsJN) (Burkholderia phytofirmans).